We begin with the raw amino-acid sequence, 317 residues long: Tegument protein UL14 homolog (317 aa).

Positions 166–291 (IAADPHSPRS…QKWLGGIPPL (126 aa)) are disordered. A compositionally biased stretch (basic and acidic residues) spans 182-195 (KAPEDARCGARKPG). Residues 198–211 (NNYTPSAQPRSQET) show a composition bias toward polar residues. Composition is skewed to basic and acidic residues over residues 217–236 (ASPD…EHHS) and 249–265 (SERR…KSSE).

This sequence belongs to the alphaherpesvirinae HHV-1 UL14 protein family.

It localises to the virion tegument. The protein resides in the host cytoplasm. Its subcellular location is the host nucleus. Contributes to the nuclear transport of the viral transcriptional activator VP16 during the early phase of infection. Therefore, participates indirectly in the regulation of the immediate-early gene expression. Additionally, seems to be important for efficient nuclear targeting of capsids. The chain is Tegument protein UL14 homolog from Equus caballus (Horse).